A 70-amino-acid polypeptide reads, in one-letter code: MDLIAFKNVKSKFLLMALLGYECPICGEIYIKRKSMITHLRKHNTNLKLSNCRRISLRTGEYIEIKTEEE.

Residues 21 to 43 (YECPICGEIYIKRKSMITHLRKH) form a C2H2-type zinc finger.

This is an uncharacterized protein from Saccharolobus islandicus (Sulfolobus islandicus).